We begin with the raw amino-acid sequence, 1381 residues long: DNA-directed RNA polymerase subunit beta'' (1381 aa).

The Zn(2+) site is built by C220, C293, C300, and C303.

This sequence belongs to the RNA polymerase beta' chain family. RpoC2 subfamily. In terms of assembly, in plastids the minimal PEP RNA polymerase catalytic core is composed of four subunits: alpha, beta, beta', and beta''. When a (nuclear-encoded) sigma factor is associated with the core the holoenzyme is formed, which can initiate transcription. It depends on Zn(2+) as a cofactor.

It localises to the plastid. Its subcellular location is the chloroplast. It carries out the reaction RNA(n) + a ribonucleoside 5'-triphosphate = RNA(n+1) + diphosphate. Its function is as follows. DNA-dependent RNA polymerase catalyzes the transcription of DNA into RNA using the four ribonucleoside triphosphates as substrates. The sequence is that of DNA-directed RNA polymerase subunit beta'' from Draba nemorosa (Woodland whitlowgrass).